The chain runs to 240 residues: Thymidylate kinase (240 aa).

Position 10–17 (10–17) interacts with ATP; it reads GINGVGKS.

The protein belongs to the thymidylate kinase family.

The enzyme catalyses dTMP + ATP = dTDP + ADP. Its pathway is pyrimidine metabolism; dTTP biosynthesis. Catalyzes the conversion of dTMP to dTDP. The polypeptide is Thymidylate kinase (TMK) (African swine fever virus (strain Badajoz 1971 Vero-adapted) (Ba71V)).